The primary structure comprises 157 residues: Transcriptional regulator MraZ (157 aa).

SpoVT-AbrB domains follow at residues 7–52 (TYTM…AGGN) and 83–126 (SETL…EPER).

Belongs to the MraZ family. As to quaternary structure, forms oligomers.

It is found in the cytoplasm. The protein resides in the nucleoid. This chain is Transcriptional regulator MraZ, found in Xanthobacter autotrophicus (strain ATCC BAA-1158 / Py2).